Consider the following 485-residue polypeptide: Probable glycine dehydrogenase (decarboxylating) subunit 2 (485 aa).

At K273 the chain carries N6-(pyridoxal phosphate)lysine.

It belongs to the GcvP family. C-terminal subunit subfamily. In terms of assembly, the glycine cleavage system is composed of four proteins: P, T, L and H. In this organism, the P 'protein' is a heterodimer of two subunits. The cofactor is pyridoxal 5'-phosphate.

The catalysed reaction is N(6)-[(R)-lipoyl]-L-lysyl-[glycine-cleavage complex H protein] + glycine + H(+) = N(6)-[(R)-S(8)-aminomethyldihydrolipoyl]-L-lysyl-[glycine-cleavage complex H protein] + CO2. Functionally, the glycine cleavage system catalyzes the degradation of glycine. The P protein binds the alpha-amino group of glycine through its pyridoxal phosphate cofactor; CO(2) is released and the remaining methylamine moiety is then transferred to the lipoamide cofactor of the H protein. The protein is Probable glycine dehydrogenase (decarboxylating) subunit 2 of Bacillus licheniformis (strain ATCC 14580 / DSM 13 / JCM 2505 / CCUG 7422 / NBRC 12200 / NCIMB 9375 / NCTC 10341 / NRRL NRS-1264 / Gibson 46).